The primary structure comprises 206 residues: Large ribosomal subunit protein uL4 (206 aa).

A disordered region spans residues 47–71; it reads TRAQKGRSEVAGSTRKQWRQKGTGR.

This sequence belongs to the universal ribosomal protein uL4 family. Part of the 50S ribosomal subunit.

Functionally, one of the primary rRNA binding proteins, this protein initially binds near the 5'-end of the 23S rRNA. It is important during the early stages of 50S assembly. It makes multiple contacts with different domains of the 23S rRNA in the assembled 50S subunit and ribosome. Its function is as follows. Forms part of the polypeptide exit tunnel. The polypeptide is Large ribosomal subunit protein uL4 (Nitrosomonas eutropha (strain DSM 101675 / C91 / Nm57)).